We begin with the raw amino-acid sequence, 2285 residues long: AT-rich interactive domain-containing protein 1A (2285 aa).

Positions 1-14 (MAAQVAPAAASSLG) are enriched in low complexity. Disordered stretches follow at residues 1–820 (MAAQ…ALPN) and 978–1005 (ATKMNNKADGTPKTESKSKKSSSSTTTN). Ala2 bears the N-acetylalanine mark. Positions 23–35 (ELKKAEQQQREEA) are enriched in basic and acidic residues. Ser58 and Ser79 each carry phosphoserine. Gly residues-rich tracts occupy residues 79–95 (SNGGGGGGGAGSGGGPG) and 121–130 (PGGGGGGSSD). Low complexity-rich tracts occupy residues 131–142 (GVGAPPHSAAAA), 212–221 (YNSYYPNRSA), and 228–265 (AYALSSPRGGTPGSGAAAAAGSKPPPSSSASASSSSSS). Phosphoserine is present on Ser233. Residues 273-286 (AMGGGGPSAAGGGT) are compositionally biased toward gly residues. The residue at position 286 (Thr286) is a Phosphothreonine. The LXXLL motif lies at 295–299 (LNQLL). Polar residues predominate over residues 295–306 (LNQLLTSPSSAR). Ser301 carries the phosphoserine modification. Over residues 310–327 (GYPGGDYSGGPQDGGAGK) the composition is skewed to gly residues. The segment covering 338–353 (GAAAAAAAAAAASGGA) has biased composition (low complexity). Phosphoserine occurs at positions 363 and 382. Low complexity predominate over residues 400–425 (PYSQQQGPPSGPQQGHGYPGQPYGSQ). Residue Arg429 is modified to Asymmetric dimethylarginine. Composition is skewed to low complexity over residues 447–457 (YTQQIPPYGQQ), 465–546 (QGQT…QHPQ), and 553–595 (QPQA…YSQQ). Ser604 is subject to Phosphoserine. The segment covering 610–621 (SQASSAPSMTSS) has biased composition (low complexity). Residues 628 to 637 (MNLSLQSRPS) show a composition bias toward polar residues. Low complexity predominate over residues 658–674 (SPGVSTSGISSSQGEQS). Polar residues predominate over residues 675-685 (NPAQSPFSPHT). Phosphoserine occurs at positions 696, 698, 702, 730, 764, and 772. Polar residues-rich tracts occupy residues 730 to 747 (SGQSDSIMHPSMNQSSIA) and 755 to 793 (RNPQMPQYSSPQPGSALSPRQPSGGQIHTGMGSYQQNSM). The segment covering 797 to 807 (GPQGGQYGPQG) has biased composition (gly residues). Positions 808-820 (GYPRQPNYNALPN) are enriched in low complexity. The ARID domain occupies 1017–1108 (EPERKMWVDR…CLYAFECKIE (92 aa)). Disordered stretches follow at residues 1113 to 1483 (PPPD…MMGG) and 1539 to 1603 (ANHE…SPSK). The span at 1141–1154 (MQGPQTPQSTSSSM) shows a compositional bias: low complexity. Pro residues predominate over residues 1162–1177 (PPTPASTPHSQIPPLP). Residue Ser1184 is modified to Phosphoserine. The segment covering 1194 to 1219 (GSDSTFQKRNSMTPNPGYQPSMNTSD) has biased composition (polar residues). At Ser1235 the chain carries Phosphoserine. An Omega-N-methylarginine modification is found at Arg1276. Polar residues-rich tracts occupy residues 1299–1315 (NMSTGAPQPNLMPSNPD) and 1339–1356 (YGNQFSTQGTPSGSPFPS). Over residues 1357-1367 (QQTTMYQQQQQ) the composition is skewed to low complexity. A Nuclear localization signal motif is present at residues 1368-1387 (NYKRPMDGTYGPPAKRHEGE). Residues 1396–1425 (GQGQPQQQQLPPAQPQPASQQQAAQPSPQQ) are compositionally biased toward low complexity. Over residues 1468–1477 (PGTNAQQNMP) the composition is skewed to polar residues. A compositionally biased stretch (pro residues) spans 1554–1577 (PYGPSAPVPPMTRPPPSNYQPPPS). Phosphoserine is present on Ser1604. Position 1612 is an N6-acetyllysine (Lys1612). The LXXLL signature appears at 1709-1713 (LPGLL). Disordered stretches follow at residues 1747–1774 (PGRFSKVSSPAPMEGGEEEEELLGPKLE) and 1859–1907 (FESK…EKRI). Phosphoserine occurs at positions 1751 and 1754. The segment covering 1761 to 1774 (GGEEEEELLGPKLE) has biased composition (acidic residues). The span at 1886–1895 (EGTPGTTDQE) shows a compositional bias: low complexity. Thr1888 is subject to Phosphothreonine. Lys1905 is subject to N6-acetyllysine. Phosphoserine occurs at positions 1929 and 1944. Short sequence motifs (LXXLL) lie at residues 1967–1971 (LCTLL) and 2085–2089 (LDGLL).

Component of SWI/SNF chromatin remodeling complexes, in some of which it can be mutually exclusive with ARID1B/BAF250B. The canonical complex contains a catalytic subunit (either SMARCA4/BRG1/BAF190A or SMARCA2/BRM/BAF190B) and at least SMARCE1, ACTL6A/BAF53, SMARCC1/BAF155, SMARCC2/BAF170, and SMARCB1/SNF5/BAF47. Other subunits specific to each of the complexes may also be present permitting several possible combinations developmentally and tissue specific. Component of the BAF (SWI/SNF-A) complex, which includes at least actin (ACTB), ARID1A/BAF250A, ARID1B/BAF250B, SMARCA2/BRM, SMARCA4/BRG1/BAF190A, ACTL6A/BAF53, ACTL6B/BAF53B, SMARCE1/BAF57, SMARCC1/BAF155, SMARCC2/BAF170, SMARCB1/SNF5/INI1, and one or more SMARCD1/BAF60A, SMARCD2/BAF60B, or SMARCD3/BAF60C. In muscle cells, the BAF complex also contains DPF3. Component of neural progenitors-specific chromatin remodeling complex (npBAF complex) composed of at least, ARID1A/BAF250A or ARID1B/BAF250B, SMARCD1/BAF60A, SMARCD3/BAF60C, SMARCA2/BRM/BAF190B, SMARCA4/BRG1/BAF190A, SMARCB1/BAF47, SMARCC1/BAF155, SMARCE1/BAF57, SMARCC2/BAF170, PHF10/BAF45A, ACTL6A/BAF53A and actin. Component of neuron-specific chromatin remodeling complex (nBAF complex) composed of at least, ARID1A/BAF250A or ARID1B/BAF250B, SMARCD1/BAF60A, SMARCD3/BAF60C, SMARCA2/BRM/BAF190B, SMARCA4/BRG1/BAF190A, SMARCB1/BAF47, SMARCC1/BAF155, SMARCE1/BAF57, SMARCC2/BAF170, DPF1/BAF45B, DPF3/BAF45C, ACTL6B/BAF53B and actin. Component of a SWI/SNF-like EBAFa complex, at least composed of SMARCA4/BRG1/BAF190A, SMARCB1/BAF47/SNF5, ACTL6A/BAF53A, SMARCE1/BAF57, SMARCD1/BAF60A, SMARCC1/BAF155, SMARCC2/BAF170, BAF250A and MLLT1/ENL. Interacts through its C-terminus with SMARCA2/BRM/BAF190B and SMARCA4/BRG1/BAF190A. Interacts with SMARCC1/BAF155. Interacts with FOS, FOSB isoform 1 and 2, FOSL1 and FOSL2. In terms of tissue distribution, highly expressed in spleen, thymus, prostate, testis, ovary, small intestine, colon, and PBL, and at a much lower level in heart, brain, placenta, lung, liver, skeletal muscle, kidney, and pancreas.

The protein resides in the nucleus. Its function is as follows. Involved in transcriptional activation and repression of select genes by chromatin remodeling (alteration of DNA-nucleosome topology). Component of SWI/SNF chromatin remodeling complexes that carry out key enzymatic activities, changing chromatin structure by altering DNA-histone contacts within a nucleosome in an ATP-dependent manner. Binds DNA non-specifically. Belongs to the neural progenitors-specific chromatin remodeling complex (npBAF complex) and the neuron-specific chromatin remodeling complex (nBAF complex). During neural development a switch from a stem/progenitor to a postmitotic chromatin remodeling mechanism occurs as neurons exit the cell cycle and become committed to their adult state. The transition from proliferating neural stem/progenitor cells to postmitotic neurons requires a switch in subunit composition of the npBAF and nBAF complexes. As neural progenitors exit mitosis and differentiate into neurons, npBAF complexes which contain ACTL6A/BAF53A and PHF10/BAF45A, are exchanged for homologous alternative ACTL6B/BAF53B and DPF1/BAF45B or DPF3/BAF45C subunits in neuron-specific complexes (nBAF). The npBAF complex is essential for the self-renewal/proliferative capacity of the multipotent neural stem cells. The nBAF complex along with CREST plays a role regulating the activity of genes essential for dendrite growth. The chain is AT-rich interactive domain-containing protein 1A (ARID1A) from Homo sapiens (Human).